A 113-amino-acid polypeptide reads, in one-letter code: Photosystem II reaction center Psb28 protein (113 aa).

The protein belongs to the Psb28 family. In terms of assembly, part of the photosystem II complex.

Its subcellular location is the cellular thylakoid membrane. The sequence is that of Photosystem II reaction center Psb28 protein from Prochlorococcus marinus (strain NATL2A).